The chain runs to 249 residues: Benzil reductase ((S)-benzoin forming) (249 aa).

Isoleucine 6, asparagine 87, tyrosine 154, lysine 158, valine 189, and threonine 191 together coordinate NADP(+). Catalysis depends on tyrosine 154, which acts as the Proton acceptor.

It belongs to the short-chain dehydrogenases/reductases (SDR) family.

The protein resides in the cytoplasm. It carries out the reaction (S)-benzoin + NADP(+) = benzil + NADPH + H(+). The enzyme catalyses 2-hydroxy-1-phenyl-1-propanone + NADP(+) = 1-phenyl-1,2-propanedione + NADPH + H(+). Inhibited by Cibacron blue 3GA, a general SDR family inhibitor. Reduces benzil stereospecifically to (S)-benzoin. Can also reduce 1-phenyl-1,2-propanedione, 1,4-naphthoquinone, 1-(4-methyl-phenyl)-2-phenyl-ethane-1,2-dione, 1-(4-fluoro-phenyl)-2-phenyl-ethane-1,2-dione, methyl benzoylformate and p-nitrobenzaldehyde in decreasing order. The sequence is that of Benzil reductase ((S)-benzoin forming) from Bacillus cereus.